The primary structure comprises 207 residues: Large ribosomal subunit protein bL25 (207 aa).

It belongs to the bacterial ribosomal protein bL25 family. CTC subfamily. In terms of assembly, part of the 50S ribosomal subunit; part of the 5S rRNA/L5/L18/L25 subcomplex. Contacts the 5S rRNA. Binds to the 5S rRNA independently of L5 and L18.

Its function is as follows. This is one of the proteins that binds to the 5S RNA in the ribosome where it forms part of the central protuberance. This chain is Large ribosomal subunit protein bL25, found in Orientia tsutsugamushi (strain Boryong) (Rickettsia tsutsugamushi).